The sequence spans 115 residues: Nucleoid-associated protein Ccel_0243 (115 aa).

It belongs to the YbaB/EbfC family. In terms of assembly, homodimer.

Its subcellular location is the cytoplasm. The protein resides in the nucleoid. Binds to DNA and alters its conformation. May be involved in regulation of gene expression, nucleoid organization and DNA protection. The sequence is that of Nucleoid-associated protein Ccel_0243 from Ruminiclostridium cellulolyticum (strain ATCC 35319 / DSM 5812 / JCM 6584 / H10) (Clostridium cellulolyticum).